The following is a 496-amino-acid chain: Probable cytosol aminopeptidase (496 aa).

K266 and D271 together coordinate Mn(2+). K278 is a catalytic residue. Residues D289, D348, and E350 each coordinate Mn(2+). R352 is an active-site residue.

Belongs to the peptidase M17 family. Mn(2+) is required as a cofactor.

The protein localises to the cytoplasm. The enzyme catalyses Release of an N-terminal amino acid, Xaa-|-Yaa-, in which Xaa is preferably Leu, but may be other amino acids including Pro although not Arg or Lys, and Yaa may be Pro. Amino acid amides and methyl esters are also readily hydrolyzed, but rates on arylamides are exceedingly low.. It carries out the reaction Release of an N-terminal amino acid, preferentially leucine, but not glutamic or aspartic acids.. In terms of biological role, presumably involved in the processing and regular turnover of intracellular proteins. Catalyzes the removal of unsubstituted N-terminal amino acids from various peptides. This is Probable cytosol aminopeptidase from Stutzerimonas stutzeri (strain A1501) (Pseudomonas stutzeri).